A 221-amino-acid chain; its full sequence is Kinetochore protein Spc25 (221 aa).

The stretch at Val63 to Glu114 forms a coiled coil.

The protein belongs to the SPC25 family. Component of the Ndc80 complex, which is composed of Ndc80, Nuf2 and Spc25.

The protein resides in the nucleus. It is found in the chromosome. The protein localises to the centromere. Its subcellular location is the kinetochore. In terms of biological role, acts as a component of the essential kinetochore-associated Ndc80 complex, which is required for chromosome segregation and spindle checkpoint activity during meiosis and mitosis. Required for kinetochore integrity and the organization of stable microtubule binding sites in the outer plate of the kinetochore. Participates in SAC signaling that responds specifically to disruptions in spindle microtubule dynamics. The NDC80 complex synergistically enhances the affinity of the SKA1 complex for microtubules and may allow the NDC80 complex to track depolymerizing microtubules. This is Kinetochore protein Spc25 from Drosophila eugracilis (Fruit fly).